The following is a 91-amino-acid chain: ATP synthase subunit c (91 aa).

A run of 2 helical transmembrane segments spans residues 4-24 and 53-73; these read FTMCMLAAGFGMAIGAFGTGI and IGLAMIESLAIYVLVVCLIIL.

It belongs to the ATPase C chain family. In terms of assembly, F-type ATPases have 2 components, F(1) - the catalytic core - and F(0) - the membrane proton channel. F(1) has five subunits: alpha(3), beta(3), gamma(1), delta(1), epsilon(1). F(0) has three main subunits: a(1), b(2) and c(10-14). The alpha and beta chains form an alternating ring which encloses part of the gamma chain. F(1) is attached to F(0) by a central stalk formed by the gamma and epsilon chains, while a peripheral stalk is formed by the delta and b chains.

It localises to the cell inner membrane. Functionally, f(1)F(0) ATP synthase produces ATP from ADP in the presence of a proton or sodium gradient. F-type ATPases consist of two structural domains, F(1) containing the extramembraneous catalytic core and F(0) containing the membrane proton channel, linked together by a central stalk and a peripheral stalk. During catalysis, ATP synthesis in the catalytic domain of F(1) is coupled via a rotary mechanism of the central stalk subunits to proton translocation. In terms of biological role, key component of the F(0) channel; it plays a direct role in translocation across the membrane. A homomeric c-ring of between 10-14 subunits forms the central stalk rotor element with the F(1) delta and epsilon subunits. The polypeptide is ATP synthase subunit c (Trichlorobacter lovleyi (strain ATCC BAA-1151 / DSM 17278 / SZ) (Geobacter lovleyi)).